The primary structure comprises 361 residues: DNA polymerase IV 3 (361 aa).

The UmuC domain occupies 12-192 (IIHVDMDAFY…LPVNKFHGVG (181 aa)). 2 residues coordinate Mg(2+): aspartate 16 and aspartate 110. Glutamate 111 is a catalytic residue.

The protein belongs to the DNA polymerase type-Y family. Monomer. It depends on Mg(2+) as a cofactor.

It is found in the cytoplasm. The enzyme catalyses DNA(n) + a 2'-deoxyribonucleoside 5'-triphosphate = DNA(n+1) + diphosphate. Its function is as follows. Poorly processive, error-prone DNA polymerase involved in untargeted mutagenesis. Copies undamaged DNA at stalled replication forks, which arise in vivo from mismatched or misaligned primer ends. These misaligned primers can be extended by PolIV. Exhibits no 3'-5' exonuclease (proofreading) activity. May be involved in translesional synthesis, in conjunction with the beta clamp from PolIII. In Mesorhizobium japonicum (strain LMG 29417 / CECT 9101 / MAFF 303099) (Mesorhizobium loti (strain MAFF 303099)), this protein is DNA polymerase IV 3 (dinB3).